Consider the following 907-residue polypeptide: Sensor protein GacS (907 aa).

A run of 3 helical transmembrane segments spans residues 9–25 (ASLMAAMLGGYFTWMQL), 84–101 (VLAHAGPTMISPSPIGSG), and 159–178 (LFASLLLILTGLAFTATLAV). Positions 182–234 (RTINGPMSQIKQAVSQLKDGNLETRLPPLGSRELDELASGINRMAATLQNAQE) constitute an HAMP domain. A Histidine kinase domain is found at 281–502 (NMSHEIRTPL…EFWISLKLPK (222 aa)). Phosphohistidine; by autocatalysis is present on His284. The Response regulatory domain occupies 658 to 777 (RVLCVDDNPA…QLAQVVLKWT (120 aa)). Asp707 is subject to 4-aspartylphosphate. Residues 814 to 907 (KADLAADMLA…RLEAEARVMA (94 aa)) enclose the HPt domain. At His853 the chain carries Phosphohistidine.

Post-translationally, activation requires a sequential transfer of a phosphate group from a His in the primary transmitter domain, to an Asp in the receiver domain and to a His in the secondary transmitter domain.

It is found in the cell inner membrane. The catalysed reaction is ATP + protein L-histidine = ADP + protein N-phospho-L-histidine.. Forms part of a two-component regulatory system GacA/GacS(LemA). May be involved in lesion formation, swarming and in the production of extracellular protease, syringomycin and N-acyl-L-homoserine lactone (acyl-HSL). Required for pathogenicity on bean. The polypeptide is Sensor protein GacS (gacS) (Pseudomonas syringae pv. syringae).